Reading from the N-terminus, the 466-residue chain is Gamma-aminobutyric acid permease (466 aa).

The Cytoplasmic segment spans residues 2-20 (GQSSQPHELGGGLKSRHVT). The next 2 membrane-spanning stretches (helical) occupy residues 21–41 (MLSI…VAIA) and 42–62 (EAGP…VMIM). Residues 63–96 (RMLAEMAVATPDTGSFSTYADKAIGRWAGYTIGW) lie on the Cytoplasmic side of the membrane. A helical membrane pass occupies residues 97–117 (LYWWFWVLVIPLEANIAAMIL). A topological domain (periplasmic) is located at residue H118. Residues 119 to 139 (SWVPGIPIWLFSLVITLALTG) form a helical membrane-spanning segment. Residues 140-153 (SNLLSVKNYGEFEF) lie on the Cytoplasmic side of the membrane. The chain crosses the membrane as a helical span at residues 154–174 (WLALCKVIAILAFIFLGAVAI). At 175–199 (SGFYPYAEVSGISRLWDSGGFMPNG) the chain is on the periplasmic side. Residues 200-220 (FGAVLSAMLITMFSFMGAEIV) traverse the membrane as a helical segment. The Cytoplasmic segment spans residues 221–246 (TIAAAESDTPEKHIVRATNSVIWRIS). A helical transmembrane segment spans residues 247 to 267 (IFYLCSIFVVVALIPWNMPGL). Over 268 to 286 (KAVGSYRSVLELLNIPHAK) the chain is Periplasmic. Residues 287 to 307 (LIMDCVILLSVTSCLNSALYT) form a helical membrane-spanning segment. Residues 308 to 334 (ASRMLYSLSRRGDAPAVMGKINRSKTP) lie on the Cytoplasmic side of the membrane. The helical transmembrane segment at 335-355 (YVAVLLSTGAAFLTVVVNYYA) threads the bilayer. Residues 356-358 (PAK) lie on the Periplasmic side of the membrane. The helical transmembrane segment at 359–379 (VFKFLIDSSGAIALLVYLVIA) threads the bilayer. Residues 380 to 402 (VSQLRMRKILRAEGSEIRLRMWL) are Cytoplasmic-facing. Residues 403–423 (YPWLTWLVIGFITFVLVVMLF) form a helical membrane-spanning segment. Residues 424 to 428 (RPAQQ) lie on the Periplasmic side of the membrane. Residues 429-449 (LEVISTGLLAIGIICTVPIMA) form a helical membrane-spanning segment. Residues 450–466 (RWKKLVLWQKTPVHNTR) lie on the Cytoplasmic side of the membrane.

The protein belongs to the amino acid-polyamine-organocation (APC) superfamily. Amino acid transporter (AAT) (TC 2.A.3.1) family. Monomer.

It is found in the cell inner membrane. The catalysed reaction is 4-aminobutanoate(in) + H(+)(in) = 4-aminobutanoate(out) + H(+)(out). The protein operates within amino-acid degradation; 4-aminobutanoate degradation. With respect to regulation, uptake is stimulated by ammonium sulfate and abolished by 2,4-dinitrophenol. Is affected both topologically and kinetically by phospholipid composition of the membrane. In cells lacking phosphatidylethanolamine (PE), the N-terminal hairpin is inverted relative to the membrane and the rate of GABA transport is reduced by more than 99%. Its function is as follows. Transporter for gamma-aminobutyrate (GABA). Transport is driven by the membrane potential. Can also transport a number of GABA analogs such as nipecotic acid or muscimol. The chain is Gamma-aminobutyric acid permease from Escherichia coli (strain K12).